The chain runs to 301 residues: Pantothenate synthetase (301 aa).

30 to 37 is an ATP binding site; sequence MGNLHEGH. The Proton donor role is filled by histidine 37. Glutamine 61 is a (R)-pantoate binding site. Glutamine 61 is a beta-alanine binding site. Residue 149 to 152 coordinates ATP; the sequence is GEKD. Glutamine 155 contributes to the (R)-pantoate binding site. Residues valine 178 and 186 to 189 each bind ATP; that span reads MSSR.

The protein belongs to the pantothenate synthetase family. As to quaternary structure, homodimer.

It localises to the cytoplasm. The enzyme catalyses (R)-pantoate + beta-alanine + ATP = (R)-pantothenate + AMP + diphosphate + H(+). It functions in the pathway cofactor biosynthesis; (R)-pantothenate biosynthesis; (R)-pantothenate from (R)-pantoate and beta-alanine: step 1/1. Its function is as follows. Catalyzes the condensation of pantoate with beta-alanine in an ATP-dependent reaction via a pantoyl-adenylate intermediate. The protein is Pantothenate synthetase of Vibrio vulnificus (strain CMCP6).